A 534-amino-acid chain; its full sequence is MEANVGFLTLCLAITLVRFLMKRYWHQSKINDKNNKAIKQHYPLPPTPKGLRPWPIVGNLPEMLMNKPTFRWIHKLMEESNTQIACIRLANVHVTPVSCPILSREILKKQDATFATRPLSISTFLITKGYITTVMVPFGEQWKKMRKVITSELLSPMRHKWLTDKRIEEADHLVRYVFNQCNNDEGSGIVDLRLATQHYCANVIKRMIFNQRYFTEEMKDGGPSVEEQNYVNAVFDMLRYIYAFSASDYISCLRGLDLDGHEKIIKDCIKLTRKRQDPVIEERIREHQKLGGNKVPVDLLDILISLKDASGQPLLSTDEIKGQVNEMIMAAVDNPSNAAEWAIAEMINQPHLFEKARQELDAVVGKERQVQESDLSQLNFVKACAREAFRLHPVAPFNVPHVSMADTTVGDYFIPKGSHVMLSRIGLGRNPKIWDEPLKYKPERHLKDDGSGVVLTESELRFISFSTGMRGCVASTLGTSMTVMLFARLLHGFTWEAPPNESRIDLTEADGELLLAKPLFALAKPRLPAHVYQT.

The first 21 residues, 1–21 (MEANVGFLTLCLAITLVRFLM), serve as a signal peptide directing secretion. Position 472 (Cys472) interacts with heme. N-linked (GlcNAc...) asparagine glycosylation is present at Asn500.

The protein belongs to the cytochrome P450 family. It depends on heme as a cofactor. Expressed in seedlings.

The enzyme catalyses L-phenylalanine + 2 reduced [NADPH--hemoprotein reductase] + 2 O2 = (E)-phenylacetaldehyde oxime + 2 oxidized [NADPH--hemoprotein reductase] + CO2 + 3 H2O + 2 H(+). In terms of biological role, involved in L-phenylalanine-derived cyanogenic glycoside biosynthesis, including prunasin and amygdalin defensive agents. Catalyzes the conversion of L-phenylalanine (Phe) into phenylacetaldoxime (PAOx). Cannot use tyrosine (Tyr), tryptophan (Trp) and valine (Val) as substrates. This is Phenylalanine N-monooxygenase CYP79D16 from Prunus mume (Japanese apricot).